We begin with the raw amino-acid sequence, 517 residues long: Acetyl-coenzyme A carboxylase carboxyl transferase subunit beta, chloroplastic (517 aa).

Composition is skewed to basic and acidic residues over residues 1-17, 24-41, 48-65, and 72-81; these read MKPT…KSNE, GDNK…KSNE, and GDKQKDKKDG. 2 disordered regions span residues 1-179 and 204-234; these read MKPT…KEEE and KHRD…DSEA. Positions 87–131 are enriched in acidic residues; sequence YDDEYEEDLEYDDEYEEDLEYDDEYEEDLEYDDEEYDDEYEEDLE. 2 stretches are compositionally biased toward basic and acidic residues: residues 132 to 179 and 209 to 229; these read GDNK…KEEE and KSVP…RDTD. The CoA carboxyltransferase N-terminal domain occupies 243 to 514; sequence LWVHCKLCSG…NSQVINIYNY (272 aa). Zn(2+) contacts are provided by cysteine 247, cysteine 250, cysteine 266, and cysteine 269. Residues 247–269 form a C4-type zinc finger; that stretch reads CKLCSGFNYKKILKSKNNVCEQC.

Belongs to the AccD/PCCB family. In terms of assembly, acetyl-CoA carboxylase is a heterohexamer composed of biotin carboxyl carrier protein, biotin carboxylase and 2 subunits each of ACCase subunit alpha and ACCase plastid-coded subunit beta (accD). Zn(2+) is required as a cofactor.

It is found in the plastid. The protein resides in the chloroplast stroma. The enzyme catalyses N(6)-carboxybiotinyl-L-lysyl-[protein] + acetyl-CoA = N(6)-biotinyl-L-lysyl-[protein] + malonyl-CoA. It participates in lipid metabolism; malonyl-CoA biosynthesis; malonyl-CoA from acetyl-CoA: step 1/1. Its function is as follows. Component of the acetyl coenzyme A carboxylase (ACC) complex. Biotin carboxylase (BC) catalyzes the carboxylation of biotin on its carrier protein (BCCP) and then the CO(2) group is transferred by the transcarboxylase to acetyl-CoA to form malonyl-CoA. The chain is Acetyl-coenzyme A carboxylase carboxyl transferase subunit beta, chloroplastic from Oenothera elata subsp. hookeri (Hooker's evening primrose).